The sequence spans 225 residues: Ribosome maturation factor RimM (225 aa).

The PRC barrel domain maps to 144–225 (ADEFYWVDLI…RIVVDWEADY (82 aa)).

The protein belongs to the RimM family. In terms of assembly, binds ribosomal protein uS19.

It localises to the cytoplasm. An accessory protein needed during the final step in the assembly of 30S ribosomal subunit, possibly for assembly of the head region. Essential for efficient processing of 16S rRNA. May be needed both before and after RbfA during the maturation of 16S rRNA. It has affinity for free ribosomal 30S subunits but not for 70S ribosomes. In Burkholderia vietnamiensis (strain G4 / LMG 22486) (Burkholderia cepacia (strain R1808)), this protein is Ribosome maturation factor RimM.